The following is a 1826-amino-acid chain: MDYKKGEHSPSSSIQILSDDATINSNYAYGEQLQSNDQYNNIQHPAPSFANPFIHEQDDSYSDILEEEPDEDAYDSPERPSSTEEFISQDESNISAGSSFMFPYNRGHPLSKRHDSIMVDEFGHEYIVEGDSIASADEAIDYDALYASWTAETKAPILAIDIENIYIELAMKFGFQWDNMRNMFDYLMVMLDSRASRMTPQEALLTLHADYIGGPQSNFKKWYFACKMDQFDLKSGVLSFISRDPSTQVPYKDMSSCEALWISRMDELSNYERIEQLALYLLCWGEANNVRFMPECLCFIYKVAYDYLISPSFKEQKNPAPKDYFLDNCITPLYNLMHDQQYEIRDQKYVRKEKDHASIIGYDDINQMFWYSKGLKALLLSDGSRIMDADVASRYFLLADIQWQRVCYKSFRESRTWLHFLHNFSRIWILHISVFWYFTVYNSPTIYTPNFHYLEGTQPARAAKWCAPALAGAVASFISFLALILEAYFVPRNNPGAQPVIPRLIFVSILIALNIVPAAFIFGFSNATQQHYRSREIVGYVHFFFSIGCVAYQSFIPLPFLLGPRFKFRSSSRKYLANSYFTNDIASLPWGRTLLSAALWITVFIAKFVESYYFLTLSVRDPIRFLQRMKPYDCYDFMIGASLCSHQPKFLLSLVYLTDLVLFFLDTYLWYMLISTMFSIAYSFYMGSAIWTPWRVIFSNLPRRIYFTLLAYKDLSTEFKPKIYVGQIWNSIMISMYREHLLSLEHLKGLLYQQVGSEYFGKQTFQSPKFFMEAAKGLNKWDAFFRRNSEAERRISFFAQSLGGKIPDAVPVPKMPSFTVLIPHYGEKILLSLREIIREQDPMSRITLLEYLKQLYPNDWDNFVQDTKLMAGDVGVEETKSDVKSEKGKKQGTVKEDLPFYCIGFKSTAPEYTLRTRIWASLRSQTLYRTASGMMNYSRALKLLYRVEQPNLLDDCDGNFERLEHQLEQMAYRKFRLCISMQRYAKFNRDEYENAEFLLRAHPELQIAYLDQDPSEDGEEPKVYATLINGFCPFENGRRLPKYRIRLSGNPILGDGKADNQNMALPFVRGEYLQLIDANQDNYIEECMKIRNVLSEFEEMDCATLTPYTKKGNARHPVAMLGAREYVFSENSGILGDVAAGKEQTFGTLFSRSLALIGGKLHYGHPDFLNTIFMTTRGGVSKAQKGLHVNEDIYAGMTALQRGGRIKHCDYFQCGKGRDLGFGTIINFTTKIGTGMGEQSLSREYFYLGTQLPFFRMLSFYYAHAGFHLNNVFIMISMQLLMLVFVNLGAMYHTVEICDYQAGAAINASLYPPGCYMLKPVLDWIRRCIISIFIVFFISFLPLVVHDLLEKGVIRAVARLCKQIFSLSPMFEVFVTQNYANSIFTNLTYGGARYIATGRGLATTRVPFSVLYSLYTGSSIYLGSRLIMMLLFGTMTVWTTHYVYFWVTMFALVICPFIYNPHQFSFVDFFVDYREFLRWLSRGNTKGHAHSWIGFCRLARTRITGVNRKVKGSPSNKLTMDMPRAGLRNVIFTEVFLPACFAFFTICAYTFMNSQPGLEDKSRAVNGFIRIWIMAALPIAISTAALLILLMFSCMLGPLLRKCSKRYGAVLAALAHAVSVFGLVFTFEALWFLEAWSFSKTVLGCIVIFAIHRLVFKLVVVFLLPREVASGENNYSWWDGHWFGRKGIPYMPIQFIREFMCKVVEMNLFAMDFILSHCILFSLTPILCIPFIDIPHSVLLFWLHPSRQIRPPIYTRKQNQLRRRTFYRYSLLFFALLCTFVAMIVVPLVLDQKLSYQFKFENSVKFFRLMQPSLGVLPNTNKNTSE.

The segment covering 34–43 has biased composition (polar residues); the sequence is QSNDQYNNIQ. Positions 34-90 are disordered; that stretch reads QSNDQYNNIQHPAPSFANPFIHEQDDSYSDILEEEPDEDAYDSPERPSSTEEFISQD. Residues 59–75 are compositionally biased toward acidic residues; it reads DSYSDILEEEPDEDAYD. The next 7 helical transmembrane spans lie at 427–447, 465–485, 504–524, 543–563, 597–617, 637–657, and 660–680; these read IWILHISVFWYFTVYNSPTIY, WCAPALAGAVASFISFLALIL, LIFVSILIALNIVPAAFIFGF, FFFSIGCVAYQSFIPLPFLLG, AALWITVFIAKFVESYYFLTL, FMIGASLCSHQPKFLLSLVYL, and LVLFFLDTYLWYMLISTMFSI. Ser885 is subject to Phosphoserine. 11 consecutive transmembrane segments (helical) span residues 1272-1292, 1329-1349, 1375-1397, 1417-1437, 1438-1458, 1531-1551, 1571-1591, 1607-1627, 1642-1662, 1701-1721, and 1770-1790; these read VFIMISMQLLMLVFVNLGAMY, IISIFIVFFISFLPLVVHDLL, VTQNYANSIFTNLTYGGARYIAT, GSSIYLGSRLIMMLLFGTMTV, WTTHYVYFWVTMFALVICPFI, IFTEVFLPACFAFFTICAYTF, IWIMAALPIAISTAALLILLM, YGAVLAALAHAVSVFGLVFTF, VLGCIVIFAIHRLVFKLVVVF, CKVVEMNLFAMDFILSHCILF, and SLLFFALLCTFVAMIVVPLVL.

This sequence belongs to the glycosyltransferase 48 family. As to quaternary structure, component of the 1,3-beta-glucan synthase (GS) complex, composed of at least the alternate catalytic subunits bgs1, bgs2, bgs3, and bgs4, and a regulatory subunit chr4.

It is found in the membrane. It catalyses the reaction [(1-&gt;3)-beta-D-glucosyl](n) + UDP-alpha-D-glucose = [(1-&gt;3)-beta-D-glucosyl](n+1) + UDP + H(+). Functionally, alternate catalytic subunit of the 1,3-beta-glucan synthase (GS) complex. Synthesizes 1,3-beta-glucan, a major structural component of the yeast cell wall. Required for cell wall biosynthesis and cell elongation. The polypeptide is 1,3-beta-glucan synthase component bgs3 (Schizosaccharomyces pombe (strain 972 / ATCC 24843) (Fission yeast)).